Consider the following 270-residue polypeptide: Orotidine 5'-phosphate decarboxylase (270 aa).

The active-site Proton donor is lysine 95.

It belongs to the OMP decarboxylase family. Type 2 subfamily.

It catalyses the reaction orotidine 5'-phosphate + H(+) = UMP + CO2. It participates in pyrimidine metabolism; UMP biosynthesis via de novo pathway; UMP from orotate: step 2/2. This is Orotidine 5'-phosphate decarboxylase from Azoarcus sp. (strain BH72).